A 1483-amino-acid polypeptide reads, in one-letter code: Cystic fibrosis transmembrane conductance regulator (1483 aa).

Over 1-77 (MQRSPLEKAS…KLINALRRCF (77 aa)) the chain is Cytoplasmic. A helical membrane pass occupies residues 78–98 (FWKFMFYGILLYLGEVTKAVQ). Residues 81-365 (FMFYGILLYL…WAVQTWYDSL (285 aa)) enclose the ABC transmembrane type-1 1 domain. The Extracellular segment spans residues 99–122 (PLLLGRIIASYDPDNKVERSIAIY). A helical membrane pass occupies residues 123–146 (LGIGLCLLFVVRTLLLHPAIFGLH). At 147-195 (HIGMQMRIAMFSLIYKKTLKLSSRVLDKISIGQLISLLSNNLNKFDEGL) the chain is on the cytoplasmic side. Residues 196-216 (ALAHFVWIVPLQVTLLMGLLW) traverse the membrane as a helical segment. The Extracellular portion of the chain corresponds to 217-222 (ELLQAS). A helical membrane pass occupies residues 223-243 (AFCGLAFLIIVAFYQAGLGRM). The Cytoplasmic portion of the chain corresponds to 244–298 (MMKYRDKRGGKINERLVITSEMIENIQSVKAYCWEEAMEKMIENLRQTELKLTRK). Residues 299–319 (AAYVRYCNSSAFFFSGFFVVF) form a helical membrane-spanning segment. Over 320 to 339 (LSVLPYALMKGIILRKIFTT) the chain is Extracellular. The chain crosses the membrane as a helical span at residues 340–358 (ISFCIVLRMAVTRQFPWAV). Residues 359–859 (QTWYDSLGAI…YLRYITIHKS (501 aa)) are Cytoplasmic-facing. Residues Trp-401, Ser-434, 458 to 465 (GSTGAGKT), and Gln-493 each bind ATP. The ABC transporter 1 domain occupies 423-646 (NGDNSLFFSN…RPDFSSKLMG (224 aa)). Cys-524 carries the S-palmitoyl cysteine lipid modification. Phosphoserine is present on residues Ser-549 and Ser-660. Residues 654-832 (SAERRNSILT…EEINEEDLKE (179 aa)) form a disordered R region region. Ser-670 bears the Phosphoserine; by PKA mark. Ser-686 carries the phosphoserine modification. Residue Lys-688 forms a Glycyl lysine isopeptide (Lys-Gly) (interchain with G-Cter in ubiquitin) linkage. A phosphoserine mark is found at Ser-700 and Ser-712. Phosphothreonine is present on Thr-717. 5 positions are modified to phosphoserine: Ser-737, Ser-768, Ser-791, Ser-796, and Ser-814. Residues 860–880 (LIFVLIWCLIIFLAEVAVSLV) traverse the membrane as a helical segment. The 298-residue stretch at 860–1157 (LIFVLIWCLI…AVNSSIDVDS (298 aa)) folds into the ABC transmembrane type-1 2 domain. Over 881–920 (FLLLFEKSPRQDTGNVTKSSNNSSYGVIITNTSSYYIIYI) the chain is Extracellular. Asn-895, Asn-901, Asn-902, and Asn-911 each carry an N-linked (GlcNAc...) asparagine glycan. Residues 921–941 (YVGVADTLLALGLLRGLPLVH) form a discontinuously helical membrane-spanning segment. The Cytoplasmic segment spans residues 942–992 (TLITASKILHHKMLHSVLQAPMSTLNTLKAGGILNRFSKDIAILDDLLPLT). A helical membrane pass occupies residues 993–1013 (IFDFIQLILIVIGAVIVVSVL). The Extracellular portion of the chain corresponds to 1014–1015 (EP). Residues 1016 to 1036 (YIFLATVPVIIAFVMLRAYFL) traverse the membrane as a helical segment. Residues 1037–1097 (HTSQQLKQLE…TANWFLYLST (61 aa)) are Cytoplasmic-facing. Residues 1098–1118 (LRWFQMRIEMIFVIFFIAVTF) traverse the membrane as a helical segment. The Extracellular portion of the chain corresponds to 1119 to 1132 (ISILTTGDGEGRVG). Residues 1133–1153 (IILTLAMNIMNTLQWAVNSSI) form a helical membrane-spanning segment. Over 1154–1483 (DVDSLMRSVS…TEEEVQETRL (330 aa)) the chain is Cytoplasmic. The 234-residue stretch at 1213–1446 (MTVKDLTAKY…KSLFRQAISN (234 aa)) folds into the ABC transporter 2 domain. ATP-binding positions include Tyr-1222 and 1247 to 1254 (GRTGSGKS). The interaction with GORASP2 stretch occupies residues 1389-1483 (RTIKQAFADC…TEEEVQETRL (95 aa)). Cys-1398 carries S-palmitoyl cysteine lipidation. 2 positions are modified to phosphoserine: Ser-1447 and Ser-1459. The span at 1455-1465 (HRNSSKHKSRS) shows a compositional bias: basic residues. The disordered stretch occupies residues 1455 to 1483 (HRNSSKHKSRSKIAALKEETEEEVQETRL). A compositionally biased stretch (acidic residues) spans 1473–1483 (ETEEEVQETRL). Positions 1481–1483 (TRL) match the PDZ-binding motif.

The protein belongs to the ABC transporter superfamily. ABCC family. CFTR transporter (TC 3.A.1.202) subfamily. As to quaternary structure, monomer; does not require oligomerization for channel activity. May form oligomers in the membrane. Interacts with SLC26A3, SLC26A6 and NHERF1. Interacts with SHANK2. Interacts with MYO6. Interacts (via C-terminus) with GOPC (via PDZ domain); this promotes CFTR internalization and thereby decreases channel activity. Interacts with SLC4A7 through NHERF1. Found in a complex with MYO5B and RAB11A. Interacts with ANO1. Interacts with SLC26A8. Interacts with AHCYL1; the interaction increases CFTR activity. Interacts with CSE1L. The core-glycosylated form interacts with GORASP2 (via PDZ GRASP-type 1 domain) in respone to ER stress. Interacts with MARCHF2; the interaction leads to CFTR ubiqtuitination and degradation. Interacts with ADGRG2. In terms of processing, N-glycosylated. Post-translationally, phosphorylated; cAMP treatment promotes phosphorylation and activates the channel. Dephosphorylation decreases the ATPase activity (in vitro). Phosphorylation at PKA sites activates the channel. Phosphorylation at PKC sites enhances the response to phosphorylation by PKA. Phosphorylated by AMPK; this inhibits channel activity. Ubiquitinated, leading to its degradation in the lysosome. Deubiquitination by USP10 in early endosomes enhances its endocytic recycling to the cell membrane. Ubiquitinated by RNF185 during ER stress. Ubiquitinated by MARCHF2.

It localises to the apical cell membrane. It is found in the early endosome membrane. The protein localises to the cell membrane. Its subcellular location is the recycling endosome membrane. The protein resides in the endoplasmic reticulum membrane. It localises to the nucleus. The catalysed reaction is ATP + H2O + closed Cl(-) channel = ADP + phosphate + open Cl(-) channel.. The enzyme catalyses chloride(in) = chloride(out). It carries out the reaction hydrogencarbonate(in) = hydrogencarbonate(out). It catalyses the reaction ATP + H2O = ADP + phosphate + H(+). Functionally, epithelial ion channel that plays an important role in the regulation of epithelial ion and water transport and fluid homeostasis. Mediates the transport of chloride ions across the cell membrane. The ion channel is also permeable to HCO(3)(-); selectivity depends on the extracellular chloride concentration. Exerts its function also by modulating the activity of other ion channels and transporters. Contributes to the regulation of the pH and the ion content of the epithelial fluid layer. Modulates the activity of the epithelial sodium channel (ENaC) complex, in part by regulating the cell surface expression of the ENaC complex. May regulate bicarbonate secretion and salvage in epithelial cells by regulating the transporter SLC4A7. Can inhibit the chloride channel activity of ANO1. Plays a role in the chloride and bicarbonate homeostasis during sperm epididymal maturation and capacitation. In Atelerix albiventris (Middle-African hedgehog), this protein is Cystic fibrosis transmembrane conductance regulator.